A 264-amino-acid polypeptide reads, in one-letter code: NAD kinase 1 (264 aa).

Residue D45 is the Proton acceptor of the active site. NAD(+) contacts are provided by residues 45–46, 122–123, R148, D150, 161–166, and A185; these read DG, NE, and TAYNKS.

Belongs to the NAD kinase family. A divalent metal cation serves as cofactor.

It localises to the cytoplasm. The catalysed reaction is NAD(+) + ATP = ADP + NADP(+) + H(+). In terms of biological role, involved in the regulation of the intracellular balance of NAD and NADP, and is a key enzyme in the biosynthesis of NADP. Catalyzes specifically the phosphorylation on 2'-hydroxyl of the adenosine moiety of NAD to yield NADP. The sequence is that of NAD kinase 1 from Listeria monocytogenes serotype 4b (strain F2365).